Reading from the N-terminus, the 609-residue chain is Chaperone protein DnaK (609 aa).

Position 173 is a phosphothreonine; by autocatalysis (Thr-173). A compositionally biased stretch (basic and acidic residues) spans Glu-525 to Leu-542. Disordered stretches follow at residues Glu-525–Ile-554 and Glu-574–Lys-609. A compositionally biased stretch (low complexity) spans Glu-574–Gln-587. Residues Ala-597–Lys-609 are compositionally biased toward basic and acidic residues.

The protein belongs to the heat shock protein 70 family.

Functionally, acts as a chaperone. This Staphylococcus epidermidis (strain ATCC 35984 / DSM 28319 / BCRC 17069 / CCUG 31568 / BM 3577 / RP62A) protein is Chaperone protein DnaK.